The chain runs to 391 residues: Putative alpha-ketoglutarate-dependent sulfonate dioxygenase (391 aa).

Fe cation-binding residues include H204 and D206. Positions 231 and 338 each coordinate 2-oxoglutarate. H353 contacts Fe cation. 2-oxoglutarate is bound by residues R364 and R368.

Belongs to the TfdA dioxygenase family. Fe(2+) is required as a cofactor.

It participates in organosulfur degradation; alkanesulfonate degradation. In terms of biological role, acts as an alpha-ketoglutarate-dependent dioxygenase active on sulfonates. This Schizosaccharomyces pombe (strain 972 / ATCC 24843) (Fission yeast) protein is Putative alpha-ketoglutarate-dependent sulfonate dioxygenase.